A 174-amino-acid polypeptide reads, in one-letter code: Adenine phosphoribosyltransferase (174 aa).

This sequence belongs to the purine/pyrimidine phosphoribosyltransferase family. Homodimer.

Its subcellular location is the cytoplasm. The enzyme catalyses AMP + diphosphate = 5-phospho-alpha-D-ribose 1-diphosphate + adenine. The protein operates within purine metabolism; AMP biosynthesis via salvage pathway; AMP from adenine: step 1/1. In terms of biological role, catalyzes a salvage reaction resulting in the formation of AMP, that is energically less costly than de novo synthesis. The protein is Adenine phosphoribosyltransferase of Nitrosomonas europaea (strain ATCC 19718 / CIP 103999 / KCTC 2705 / NBRC 14298).